A 492-amino-acid polypeptide reads, in one-letter code: Zn(2)-C6 fungal-type transcription factor (492 aa).

A DNA-binding region (zn(2)-C6 fungal-type) is located at residues 14 to 41 (CRRCKNRKIKCDEVHPRCGNCAKHGVPC). A disordered region spans residues 58-119 (TSTESVGAPT…QPSISSSTNT (62 aa)). Residues 78–95 (SAPRTPLTRPRAPSSPAR) show a composition bias toward low complexity. The residue at position 82 (threonine 82) is a Phosphothreonine. Serine 92 and serine 102 each carry phosphoserine. Residues 107-119 (VYSQPSISSSTNT) are compositionally biased toward polar residues. The residue at position 217 (threonine 217) is a Phosphothreonine. Position 305 is a phosphoserine (serine 305).

In terms of assembly, interacts with HOG1. Post-translationally, phosphorylation at Thr-82, Ser-92, Ser-102, thr-117 and ser-305 by HOG1 is required for regulating expression of ergosterol biosynthesis genes.

It localises to the nucleus. Functionally, transcription factor that targets gene promoters containing 2 conserved CGAA repeat sequences. Positively regulates the expression of ergosterol biosynthesis genes including CYP51A and CYP51B encoding the sterol 14-alpha demethylase, and ERG6A and ERG6B encoding the sterol 24-C-methyltransferase. This is Zn(2)-C6 fungal-type transcription factor from Gibberella zeae (strain ATCC MYA-4620 / CBS 123657 / FGSC 9075 / NRRL 31084 / PH-1) (Wheat head blight fungus).